A 237-amino-acid polypeptide reads, in one-letter code: Ribose-5-phosphate isomerase A (237 aa).

Substrate-binding positions include 30-33 (SGST), 87-90 (DGAD), and 100-103 (KGGG). Glu109 serves as the catalytic Proton acceptor. Lys127 is a substrate binding site.

It belongs to the ribose 5-phosphate isomerase family. As to quaternary structure, homodimer.

It catalyses the reaction aldehydo-D-ribose 5-phosphate = D-ribulose 5-phosphate. It functions in the pathway carbohydrate degradation; pentose phosphate pathway; D-ribose 5-phosphate from D-ribulose 5-phosphate (non-oxidative stage): step 1/1. Catalyzes the reversible conversion of ribose-5-phosphate to ribulose 5-phosphate. The sequence is that of Ribose-5-phosphate isomerase A from Prochlorococcus marinus (strain SARG / CCMP1375 / SS120).